The chain runs to 1280 residues: Ankyrin repeat and sterile alpha motif domain-containing protein 1B (1280 aa).

ANK repeat units follow at residues 2-31 (GKEQ…GLLG), 57-86 (SGYT…STNV), 90-119 (KGCF…SHSR), 126-155 (EKET…DPSM), 159-188 (RGET…NLMS), 192-221 (RKHT…DVNT), and 224-253 (EKGS…DANI). Disordered regions lie at residues 299–322 (RHRP…LRHK), 361–399 (MESF…EEKS), 479–573 (SVSD…STGS), 704–723 (NGEA…SNTG), and 755–791 (SNLV…PSFT). Residues 482–491 (DAERGNHGDD) show a composition bias toward basic and acidic residues. 3 stretches are compositionally biased toward polar residues: residues 520–550 (KQRT…SSLG), 707–723 (ARSN…SNTG), and 770–782 (SRGQ…SSPS). SAM domains follow at residues 824–890 (CPVQ…LPRV) and 898–963 (NNPT…RLHE). 2 disordered regions span residues 960-994 (RLHE…LSQA) and 1208-1243 (GSST…MDQK). A compositionally biased stretch (polar residues) spans 980-994 (GNHTPPQLSPSLSQA). Positions 1071 to 1223 (IFQSCDYEAY…ESFDSKPSKP (153 aa)) constitute a PID domain.

Its subcellular location is the cytoplasm. This is Ankyrin repeat and sterile alpha motif domain-containing protein 1B (anks1b) from Danio rerio (Zebrafish).